Reading from the N-terminus, the 791-residue chain is MKKPILISRAIVVLPYETTTIEVGRPKSIQAIDLAKQSSSKEIIIISQKDIDTDEVVNFDELYKVGTLVKIKSIIDNFDEGYSIEVEGLKAVYINNENDVIDAIEYEYEDVITNPILSNKDEIAINGINSEIFNIINKRSRHKNINFDNMHALISLEKEKFAYLAAATYINDYDNEISEKTIEDRINILLQPNLLLVHETILHLLFDQLVDKRVIEDEVEKTITDKINNNFQKQQREFYLREKLKVVKEQLGELSSREEDADKIRAKIEDLELPPNVKERALAELNRFENAMSSNESSVIKSYLDWLLDLPWTQQGVDNTDLMSVRTHLDDNHYGIEKVKERILEYLALRMRNPNLKGPIICLVGPPGVGKTSLVTSIAQALNKKFVKVSLGGVRDESEIRGHRKTYVGAMPGRIIKGMKKAGVINPLFLLDEIDKMTSDQRGDPAAAMLEVLDPEQNKNFSDNYIEEEYDLSKVMFMATANYYQQIPYALIDRLEVIELSSYTAIEKREIAKSHLLKRIFMDAKLNENELIFTDDALDFIINHYTKEAGVRELDRQLGHIVRKYIVETYKNKNNQSPLNLKVDEAMIIKYLGKIKFDFNKKEETTIPGIVNGMAYTAAGGDLLPIEVNHSTNGKGGNVTITGNLEKTMNESVSVALGFVKANADKYGIDTKKVSFKEIDIHVHVPSGGIPKDGPSAGIAITTAIISSLSQRPVRTTLSMTGEIMLRGNVGIIGGVKEKVISAYRAGVREIILPIDDERYLEDVPKYILDDIKIHLVKHYDEVYNIVFGEK.

In terms of domain architecture, Lon N-terminal spans 3–209 (KPILISRAIV…TILHLLFDQL (207 aa)). 365–372 (GPPGVGKT) contributes to the ATP binding site. Residues 605 to 790 (TTIPGIVNGM…DEVYNIVFGE (186 aa)) form the Lon proteolytic domain. Residues Ser696 and Lys739 contribute to the active site.

The protein belongs to the peptidase S16 family. Homohexamer. Organized in a ring with a central cavity.

It localises to the cytoplasm. The enzyme catalyses Hydrolysis of proteins in presence of ATP.. ATP-dependent serine protease that mediates the selective degradation of mutant and abnormal proteins as well as certain short-lived regulatory proteins. Required for cellular homeostasis and for survival from DNA damage and developmental changes induced by stress. Degrades polypeptides processively to yield small peptide fragments that are 5 to 10 amino acids long. Binds to DNA in a double-stranded, site-specific manner. This Ureaplasma parvum serovar 3 (strain ATCC 27815 / 27 / NCTC 11736) protein is Lon protease.